We begin with the raw amino-acid sequence, 418 residues long: L-rhamnose isomerase (418 aa).

Positions 262, 294, and 296 each coordinate Mn(2+).

This sequence belongs to the rhamnose isomerase family. Mn(2+) serves as cofactor.

It localises to the cytoplasm. The enzyme catalyses L-rhamnopyranose = L-rhamnulose. Its pathway is carbohydrate degradation; L-rhamnose degradation; glycerone phosphate from L-rhamnose: step 1/3. Its function is as follows. Catalyzes the interconversion of L-rhamnose and L-rhamnulose. The polypeptide is L-rhamnose isomerase (Bacteroides thetaiotaomicron (strain ATCC 29148 / DSM 2079 / JCM 5827 / CCUG 10774 / NCTC 10582 / VPI-5482 / E50)).